The primary structure comprises 99 residues: Acylphosphatase-2 (99 aa).

The residue at position 2 (Ser2) is an N-acetylserine. Positions Ser9 to Tyr99 constitute an Acylphosphatase-like domain. Catalysis depends on residues Arg24 and Asn42. A Phosphoserine modification is found at Ser93.

The protein belongs to the acylphosphatase family.

The catalysed reaction is an acyl phosphate + H2O = a carboxylate + phosphate + H(+). Its physiological role is not yet clear. This Bos taurus (Bovine) protein is Acylphosphatase-2 (ACYP2).